We begin with the raw amino-acid sequence, 325 residues long: Tyrosine phosphatase H2 (325 aa).

One can recognise a Tyrosine-protein phosphatase domain in the interval V27–Y295. Catalysis depends on C236, which acts as the Phosphocysteine intermediate.

Belongs to the protein-tyrosine phosphatase family.

The protein localises to the host cytoplasm. The enzyme catalyses O-phospho-L-tyrosyl-[protein] + H2O = L-tyrosyl-[protein] + phosphate. Functionally, suppresses host immune cell adhesion and phagocytosis. Triggers host mitochondrial membrane depolarization and caspase-dependent apoptosis. This is Tyrosine phosphatase H2 (H2) from Microplitis demolitor bracovirus (isolate Webb) (MdBV).